The primary structure comprises 130 residues: Phosphoribosyl-AMP cyclohydrolase (130 aa).

Asp-78 is a Mg(2+) binding site. Cys-79 is a Zn(2+) binding site. Residues Asp-80 and Asp-82 each coordinate Mg(2+). The Zn(2+) site is built by Cys-96 and Cys-103.

This sequence belongs to the PRA-CH family. Homodimer. It depends on Mg(2+) as a cofactor. Zn(2+) serves as cofactor.

Its subcellular location is the cytoplasm. It carries out the reaction 1-(5-phospho-beta-D-ribosyl)-5'-AMP + H2O = 1-(5-phospho-beta-D-ribosyl)-5-[(5-phospho-beta-D-ribosylamino)methylideneamino]imidazole-4-carboxamide. The protein operates within amino-acid biosynthesis; L-histidine biosynthesis; L-histidine from 5-phospho-alpha-D-ribose 1-diphosphate: step 3/9. Its function is as follows. Catalyzes the hydrolysis of the adenine ring of phosphoribosyl-AMP. The sequence is that of Phosphoribosyl-AMP cyclohydrolase from Nitrosospira multiformis (strain ATCC 25196 / NCIMB 11849 / C 71).